We begin with the raw amino-acid sequence, 347 residues long: Ribosomal RNA small subunit methyltransferase C (347 aa).

The protein belongs to the methyltransferase superfamily. RsmC family. Monomer.

It localises to the cytoplasm. It carries out the reaction guanosine(1207) in 16S rRNA + S-adenosyl-L-methionine = N(2)-methylguanosine(1207) in 16S rRNA + S-adenosyl-L-homocysteine + H(+). In terms of biological role, specifically methylates the guanine in position 1207 of 16S rRNA in the 30S particle. The polypeptide is Ribosomal RNA small subunit methyltransferase C (Yersinia pseudotuberculosis serotype IB (strain PB1/+)).